A 506-amino-acid polypeptide reads, in one-letter code: 2-isopropylmalate synthase (506 aa).

The region spanning 4–266 (ILFMDTTLRD…EPSMTLKEIK (263 aa)) is the Pyruvate carboxyltransferase domain. The Mn(2+) site is built by Asp13, His201, His203, and Asn237. Residues 390 to 506 (NITQLQVHFV…KLKSFIQLVK (117 aa)) form a regulatory domain region.

Belongs to the alpha-IPM synthase/homocitrate synthase family. LeuA type 1 subfamily. As to quaternary structure, homodimer. Requires Mn(2+) as cofactor.

The protein localises to the cytoplasm. It catalyses the reaction 3-methyl-2-oxobutanoate + acetyl-CoA + H2O = (2S)-2-isopropylmalate + CoA + H(+). The protein operates within amino-acid biosynthesis; L-leucine biosynthesis; L-leucine from 3-methyl-2-oxobutanoate: step 1/4. Catalyzes the condensation of the acetyl group of acetyl-CoA with 3-methyl-2-oxobutanoate (2-ketoisovalerate) to form 3-carboxy-3-hydroxy-4-methylpentanoate (2-isopropylmalate). The chain is 2-isopropylmalate synthase from Bacillus thuringiensis (strain Al Hakam).